A 373-amino-acid chain; its full sequence is MNPAEHDEAVSQFCAMTRARPDEAQEYLATNGWDLEAAVTEFFAEQDETAGSSEPTGQPSAKSSSSTPRESSSSRKQPPKKFATLGDLASGAADSSDDDDDENQDFFAGGEKSGLAVQNPDDLKKKIIEKARRTQLPASDDSEPRRNYFTGPARTLGGEDTPSRVIDTPSGPAQPQIPRRVRRTLHFWADGFSVDDGELYRSDDPQNAEILNSIRQGRAPLSIMNAQHGQDVDVEIKQHDEKYVRPKPKYQPFAGKGQRLGSPTPGIRAPAPSEPAPAPQSSSGPPKPNVDESQPVVTLQIRLGDGTRLTSRFNTTHTIGDVYDFVSAASPQSQARPWVLLTTFPSKELTDKAAVLGDLPEFKRGGVVVQKWQ.

2 disordered regions span residues 39–179 and 236–293; these read VTEF…QIPR and IKQH…VDES. A compositionally biased stretch (polar residues) spans 49 to 59; sequence TAGSSEPTGQP. Low complexity-rich tracts occupy residues 60-71 and 85-94; these read SAKSSSSTPRES and LGDLASGAAD. Acidic residues predominate over residues 95–104; that stretch reads SSDDDDDENQ. Over residues 121–132 the composition is skewed to basic and acidic residues; sequence DDLKKKIIEKAR. An SEP domain is found at 185–258; it reads LHFWADGFSV…KYQPFAGKGQ (74 aa). One can recognise a UBX domain in the interval 292–369; it reads ESQPVVTLQI…PEFKRGGVVV (78 aa).

In terms of biological role, involved in CDC48-dependent protein degradation through the ubiquitin/proteasome pathway. This is UBX domain-containing protein 1 (ubx1) from Emericella nidulans (strain FGSC A4 / ATCC 38163 / CBS 112.46 / NRRL 194 / M139) (Aspergillus nidulans).